The sequence spans 96 residues: Large ribosomal subunit protein bL27 (96 aa).

A propeptide spanning residues 1-9 (MLRLDLQFF) is cleaved from the precursor. The disordered stretch occupies residues 14-35 (GVGSTKNGRDSQSKRLGAKRAD).

This sequence belongs to the bacterial ribosomal protein bL27 family. Post-translationally, the N-terminus is cleaved by ribosomal processing cysteine protease Prp.

In Bacillus cytotoxicus (strain DSM 22905 / CIP 110041 / 391-98 / NVH 391-98), this protein is Large ribosomal subunit protein bL27.